A 44-amino-acid polypeptide reads, in one-letter code: Cytochrome b559 subunit beta (44 aa).

The helical transmembrane segment at 19 to 35 (WLAVHTLAVPTVFFIGA) threads the bilayer. A heme-binding site is contributed by histidine 23.

This sequence belongs to the PsbE/PsbF family. Heterodimer of an alpha subunit and a beta subunit. PSII is composed of 1 copy each of membrane proteins PsbA, PsbB, PsbC, PsbD, PsbE, PsbF, PsbH, PsbI, PsbJ, PsbK, PsbL, PsbM, PsbT, PsbX, PsbY, PsbZ, Psb30/Ycf12, peripheral proteins PsbO, CyanoQ (PsbQ), PsbU, PsbV and a large number of cofactors. It forms dimeric complexes. It depends on heme b as a cofactor.

The protein localises to the cellular thylakoid membrane. This b-type cytochrome is tightly associated with the reaction center of photosystem II (PSII). PSII is a light-driven water:plastoquinone oxidoreductase that uses light energy to abstract electrons from H(2)O, generating O(2) and a proton gradient subsequently used for ATP formation. It consists of a core antenna complex that captures photons, and an electron transfer chain that converts photonic excitation into a charge separation. This is Cytochrome b559 subunit beta from Gloeothece citriformis (strain PCC 7424) (Cyanothece sp. (strain PCC 7424)).